The primary structure comprises 378 residues: Anhydro-N-acetylmuramic acid kinase (378 aa).

An ATP-binding site is contributed by 23 to 30; that stretch reads GTSMDGAD.

It belongs to the anhydro-N-acetylmuramic acid kinase family.

The enzyme catalyses 1,6-anhydro-N-acetyl-beta-muramate + ATP + H2O = N-acetyl-D-muramate 6-phosphate + ADP + H(+). The protein operates within amino-sugar metabolism; 1,6-anhydro-N-acetylmuramate degradation. Its pathway is cell wall biogenesis; peptidoglycan recycling. Its function is as follows. Catalyzes the specific phosphorylation of 1,6-anhydro-N-acetylmuramic acid (anhMurNAc) with the simultaneous cleavage of the 1,6-anhydro ring, generating MurNAc-6-P. Is required for the utilization of anhMurNAc either imported from the medium or derived from its own cell wall murein, and thus plays a role in cell wall recycling. The protein is Anhydro-N-acetylmuramic acid kinase of Bordetella bronchiseptica (strain ATCC BAA-588 / NCTC 13252 / RB50) (Alcaligenes bronchisepticus).